A 126-amino-acid chain; its full sequence is Histone H2B 7 (126 aa).

Low complexity predominate over residues 1–12 (MPEPAKSAPAPK). The segment at 1 to 35 (MPEPAKSAPAPKKGSKKAVTKTQKKGDKKRKRARK) is disordered. 2 positions are modified to N6-acetyllysine: Lys6 and Lys13. Residues 13–34 (KGSKKAVTKTQKKGDKKRKRAR) are compositionally biased toward basic residues. Ser15 bears the Phosphoserine mark. Residues Lys16 and Lys21 each carry the N6-acetyllysine modification. Ser113 is a glycosylation site (O-linked (GlcNAc) serine). Lys121 participates in a covalent cross-link: Glycyl lysine isopeptide (Lys-Gly) (interchain with G-Cter in ubiquitin).

It belongs to the histone H2B family. As to quaternary structure, the nucleosome is a histone octamer containing two molecules each of H2A, H2B, H3 and H4 assembled in one H3-H4 heterotetramer and two H2A-H2B heterodimers. The octamer wraps approximately 147 bp of DNA. Monoubiquitination of Lys-121 by the BRE1 gives a specific tag for epigenetic transcriptional activation and is also prerequisite for histone H3 'Lys-4' and 'Lys-79' methylation. In terms of processing, phosphorylated on Ser-15 during apoptosis; which facilitates apoptotic chromatin condensation. Post-translationally, glcNAcylation at Ser-113 promotes monoubiquitination of Lys-121. It fluctuates in response to extracellular glucose, and associates with transcribed genes.

It localises to the nucleus. It is found in the chromosome. In terms of biological role, core component of nucleosome. Nucleosomes wrap and compact DNA into chromatin, limiting DNA accessibility to the cellular machineries which require DNA as a template. Histones thereby play a central role in transcription regulation, DNA repair, DNA replication and chromosomal stability. DNA accessibility is regulated via a complex set of post-translational modifications of histones, also called histone code, and nucleosome remodeling. The sequence is that of Histone H2B 7 (H2B-VII) from Gallus gallus (Chicken).